The primary structure comprises 336 residues: MEAIAYSLAFTFLKIVIVFSLALGIGAYLTWFERKLAGHIQNRLGPTVVGKFGILQPLADALKLATKEVIIPRGADKPVYYAAVVMALVPSILLLTIIPFGPGFRVGNTYIEPIIADVNIALLLAFAFGSLSVYGTIFSGWASNSKYAFIGSLRKAAVVIAYEVVLGFSVLGVILLAGTLSTVGIVEAQIQKGVWFIFYQPVAFILYLFCMLAESGRVPFDIQEAEAELVTGYNVEYGGMKFGAFPLAEWYVNVIALSAIAVVLFFGGWDGPHIFGPLSPYFWFVFKTFALVFFTLWLHWTLPRFQAKDITEIAWKILLPIAILNVIITAVVVYAF.

The next 8 helical transmembrane spans lie at 12–32 (FLKIVIVFSLALGIGAYLTWF), 84–104 (VVMALVPSILLLTIIPFGPGF), 118–138 (VNIALLLAFAFGSLSVYGTIF), 156–176 (AAVVIAYEVVLGFSVLGVILL), 193–213 (GVWFIFYQPVAFILYLFCMLA), 247–267 (LAEWYVNVIALSAIAVVLFFG), 274–294 (IFGPLSPYFWFVFKTFALVFF), and 313–333 (IAWKILLPIAILNVIITAVVV).

This sequence belongs to the complex I subunit 1 family. NDH-1 is composed of 14 different subunits. Subunits NuoA, H, J, K, L, M, N constitute the membrane sector of the complex.

It localises to the cell inner membrane. The enzyme catalyses a quinone + NADH + 5 H(+)(in) = a quinol + NAD(+) + 4 H(+)(out). Its function is as follows. NDH-1 shuttles electrons from NADH, via FMN and iron-sulfur (Fe-S) centers, to quinones in the respiratory chain. The immediate electron acceptor for the enzyme in this species is believed to be ubiquinone. Couples the redox reaction to proton translocation (for every two electrons transferred, four hydrogen ions are translocated across the cytoplasmic membrane), and thus conserves the redox energy in a proton gradient. This subunit may bind ubiquinone. This is NADH-quinone oxidoreductase subunit H from Aquifex aeolicus (strain VF5).